The following is a 469-amino-acid chain: SHC-transforming protein 1 (469 aa).

Residues 1 to 26 (MNKLSGGGGRRTRVEGGQLGGEEWTR) are disordered. Phosphoserine is present on S29. An N6-acetyllysine modification is found at K44. In terms of domain architecture, PID spans 46 to 229 (MGPGVSYLVR…AGFDGSAWDE (184 aa)). Positions 230 to 373 (EEEELPDHQY…SMAEQLQGES (144 aa)) are CH1. Phosphotyrosine occurs at positions 239, 240, and 313. Residues 322–344 (ARQAGGGAGPPNPSVNGSAPRDL) are disordered. S339 bears the Phosphoserine mark. The 92-residue stretch at 374-465 (WFHGKLSRRE…GSELCLQQPV (92 aa)) folds into the SH2 domain.

Interacts with CPNE3; this interaction may mediate the binding of CPNE3 with ERBB2. Interacts with the NPXY motif of tyrosine-phosphorylated IGF1R and INSR in vitro via the PID domain. Once activated, binds to GRB2. Interacts with tyrosine-phosphorylated CD3T and DDR2. Interacts with the N-terminal region of APS. Interacts with phosphorylated LRP1 and IRS4. Interacts with INPP5D/SHIP1 and INPPL1/SHIP2. Interacts with ALK, GAB2, GRB7 and KIT. Interacts with PTPN6/SHP (tyrosine phosphorylated). Identified in a complex containing FGFR4, NCAM1, CDH2, PLCG1, FRS2A, SRC, SHC1, GAP43 and CTTN. Interacts with EPHB1 and GRB2; activates the MAPK/ERK cascade to regulate cell migration. Interacts with PDGFRB (tyrosine-phosphorylated). Interacts with ERBB4. Interacts with TEK/TIE2 (tyrosine-phosphorylated). Interacts with PTK2/FAK1. Interacts with FLT4 (tyrosine-phosphorylated). Interacts with the Trk receptors NTRK1, NTRK2 and NTRK3; in a phosphotyrosine-dependent manner. Interacts with CEACAM1; this interaction is CEACAM1-phosphorylation-dependent and mediates interaction with EGFR or INSR resulting in decrease coupling of SHC1 to the MAPK3/ERK1-MAPK1/ERK2 pathway. Interacts (via PID domain) with PEAK1 (when phosphorylated). Found in a complex with PPP1CA, PPP1CC, SHC1 and PEAK1. Phosphorylated by activated epidermal growth factor receptor. Phosphorylated in response to KIT signaling. Tyrosine phosphorylated in response to FLT3 signaling and by ligand-activated ALK. Tyrosine phosphorylated by TEK/TIE2. Tyrosine phosphorylated by ligand-activated PDGFRB. May be tyrosine phosphorylated by activated PTK2/FAK1. Dephosphorylation by PTPN2 may regulate interaction with GRB2. Phosphorylated in response to FLT4 signaling. Tyrosine phosphorylated by activated PTK2B/PYK2.

Its subcellular location is the cytoplasm. The protein localises to the cell junction. It localises to the focal adhesion. Signaling adapter that couples activated growth factor receptors to signaling pathways. Participates in a signaling cascade initiated by activated KIT and KITLG/SCF. Participates in signaling downstream of the angiopoietin receptor TEK/TIE2, and plays a role in the regulation of endothelial cell migration and sprouting angiogenesis. This Rattus norvegicus (Rat) protein is SHC-transforming protein 1 (Shc1).